The sequence spans 80 residues: Exodeoxyribonuclease 7 small subunit (80 aa).

Belongs to the XseB family. In terms of assembly, heterooligomer composed of large and small subunits.

The protein localises to the cytoplasm. It catalyses the reaction Exonucleolytic cleavage in either 5'- to 3'- or 3'- to 5'-direction to yield nucleoside 5'-phosphates.. In terms of biological role, bidirectionally degrades single-stranded DNA into large acid-insoluble oligonucleotides, which are then degraded further into small acid-soluble oligonucleotides. The protein is Exodeoxyribonuclease 7 small subunit of Maridesulfovibrio salexigens (strain ATCC 14822 / DSM 2638 / NCIMB 8403 / VKM B-1763) (Desulfovibrio salexigens).